The following is a 244-amino-acid chain: Cell division protein ZapD (244 aa).

It belongs to the ZapD family. As to quaternary structure, interacts with FtsZ.

It localises to the cytoplasm. Its function is as follows. Cell division factor that enhances FtsZ-ring assembly. Directly interacts with FtsZ and promotes bundling of FtsZ protofilaments, with a reduction in FtsZ GTPase activity. The sequence is that of Cell division protein ZapD from Shewanella sp. (strain MR-4).